A 193-amino-acid polypeptide reads, in one-letter code: Major structural subunit of bundle-forming pilus (193 aa).

The propeptide occupies 1–13; the sequence is MVSKIMNKKYEKG. An N-methylleucine modification is found at Leu-14. The helical transmembrane segment at 14–35 threads the bilayer; sequence LSLIESAMVLALAATVTAGVMF. A disulfide bridge connects residues Cys-129 and Cys-179.

The protein belongs to the N-Me-Phe pilin family. 10 to 100 laterally aligned filaments or bundle-forming pili coalesce into rope-like bundles. These form linkages between the bacteria within the enteropathogenic E.coli (EPEC) microcolonies that are attached to epithelial cells.

It localises to the fimbrium. It is found in the membrane. Functionally, major repeating bundle-forming pilus (BFP) subunit. Is required for EPEC localized adherence. The polypeptide is Major structural subunit of bundle-forming pilus (bfpA) (Escherichia coli O111:H-).